Here is a 424-residue protein sequence, read N- to C-terminus: Tyrosine--tRNA ligase (424 aa).

Tyr36 contributes to the L-tyrosine binding site. Positions 41-50 (PTAPSLHAGH) match the 'HIGH' region motif. Tyr171 and Gln175 together coordinate L-tyrosine. The 'KMSKS' region motif lies at 231–235 (KFGKS). Lys234 lines the ATP pocket. The region spanning 356–413 (DGIVDLLVASGLSASKGAARRTIHEGGVSVNNIRVDNEEWVPQSSDFLHGRWLVLRRG) is the S4 RNA-binding domain.

Belongs to the class-I aminoacyl-tRNA synthetase family. TyrS type 1 subfamily. As to quaternary structure, homodimer.

It localises to the cytoplasm. It carries out the reaction tRNA(Tyr) + L-tyrosine + ATP = L-tyrosyl-tRNA(Tyr) + AMP + diphosphate + H(+). In terms of biological role, catalyzes the attachment of tyrosine to tRNA(Tyr) in a two-step reaction: tyrosine is first activated by ATP to form Tyr-AMP and then transferred to the acceptor end of tRNA(Tyr). The protein is Tyrosine--tRNA ligase of Mycobacterium bovis (strain ATCC BAA-935 / AF2122/97).